The chain runs to 50 residues: ISSQHLCGSHLVEALNLVCGDRGFFYNPRGIVEQCCHRPCSIFELENYCN.

Disulfide bonds link C7-C36, C19-C49, and C35-C40.

This sequence belongs to the insulin family. As to quaternary structure, heterodimer of a B chain and an A chain linked by two disulfide bonds.

The protein localises to the secreted. Functionally, insulin decreases blood glucose concentration. It increases cell permeability to monosaccharides, amino acids and fatty acids. It accelerates glycolysis, the pentose phosphate cycle, and glycogen synthesis in liver. The sequence is that of Insulin-1 from Katsuwonus pelamis (Skipjack tuna).